Reading from the N-terminus, the 234-residue chain is Purine nucleoside phosphorylase DeoD-type (234 aa).

Histidine 5 serves as a coordination point for a purine D-ribonucleoside. Residues glycine 21, arginine 25, arginine 44, and 88–91 contribute to the phosphate site; that span reads RIGT. Residues 180–182 and 204–205 each bind a purine D-ribonucleoside; these read DME and SD. The active-site Proton donor is the aspartate 205.

Belongs to the PNP/UDP phosphorylase family. As to quaternary structure, homohexamer; trimer of homodimers.

It catalyses the reaction a purine D-ribonucleoside + phosphate = a purine nucleobase + alpha-D-ribose 1-phosphate. It carries out the reaction a purine 2'-deoxy-D-ribonucleoside + phosphate = a purine nucleobase + 2-deoxy-alpha-D-ribose 1-phosphate. Catalyzes the reversible phosphorolytic breakdown of the N-glycosidic bond in the beta-(deoxy)ribonucleoside molecules, with the formation of the corresponding free purine bases and pentose-1-phosphate. In Buchnera aphidicola subsp. Acyrthosiphon pisum (strain 5A), this protein is Purine nucleoside phosphorylase DeoD-type.